The chain runs to 226 residues: RPA-interacting protein A (226 aa).

The tract at residues 1-45 (MEAERRHRALYKGTTPPWKETYRKRCVERLKRNRSKLLDKFRQVG) is interaction with importin beta. The tract at residues 49-171 (HGGVGGSFLV…QCGVYINTQS (123 aa)) is interaction with RPA1. An RIP-type zinc finger spans residues 144–219 (CPVCNRNYLT…ASLFMSCQEC (76 aa)).

In terms of assembly, interacts directly with the rpa1 subunit of RPA complex. Interacts with importin beta, but not with importin alpha. Forms a complex with the RPA complex and importin beta, which is dissociated by Ran-GTP.

The protein localises to the nucleus. In terms of biological role, mediates the import of RPA complex into the nucleus, via its interaction with importin beta. This is RPA-interacting protein A (rpain-a) from Xenopus laevis (African clawed frog).